The following is a 323-amino-acid chain: Aldo-keto reductase family 1 member C1 (323 aa).

NADP(+)-binding positions include 20–24 and D50; that span reads GFGTY. Residue Y24 coordinates substrate. Y55 functions as the Proton donor in the catalytic mechanism. H117 contributes to the substrate binding site. Residues 166–167, Q190, and 216–222 contribute to the NADP(+) site; these read SN and YSALGSH. Substrate is bound by residues H222 and W227. Residue 270 to 280 participates in NADP(+) binding; the sequence is KSYNEQRIRQN.

This sequence belongs to the aldo/keto reductase family. Monomer.

Its subcellular location is the cytoplasm. The protein localises to the cytosol. It carries out the reaction a 3alpha-hydroxysteroid + NADP(+) = a 3-oxosteroid + NADPH + H(+). The catalysed reaction is a 3alpha-hydroxysteroid + NAD(+) = a 3-oxosteroid + NADH + H(+). It catalyses the reaction (17R,20S)-17,20-dihydroxypregn-4-en-3-one + NADP(+) = 17alpha-hydroxyprogesterone + NADPH + H(+). The enzyme catalyses (17R,20S)-17,20-dihydroxypregn-4-en-3-one + NAD(+) = 17alpha-hydroxyprogesterone + NADH + H(+). It carries out the reaction (20S)-hydroxypregn-4-en-3-one + NADP(+) = progesterone + NADPH + H(+). The catalysed reaction is (20S)-hydroxypregn-4-en-3-one + NAD(+) = progesterone + NADH + H(+). It catalyses the reaction (1R,2R)-1,2-dihydrobenzene-1,2-diol + NADP(+) = catechol + NADPH + H(+). The enzyme catalyses (S)-indan-1-ol + NAD(+) = indan-1-one + NADH + H(+). It carries out the reaction (S)-indan-1-ol + NADP(+) = indan-1-one + NADPH + H(+). The catalysed reaction is 5alpha-androstane-3alpha,17beta-diol + NADP(+) = 17beta-hydroxy-5alpha-androstan-3-one + NADPH + H(+). It catalyses the reaction 5alpha-androstane-3beta,17beta-diol + NADP(+) = 17beta-hydroxy-5alpha-androstan-3-one + NADPH + H(+). The enzyme catalyses 5alpha-androstane-3alpha,17beta-diol + NAD(+) = 17beta-hydroxy-5alpha-androstan-3-one + NADH + H(+). It carries out the reaction 17beta-hydroxy-5alpha-androstan-3-one + NADP(+) = 5alpha-androstan-3,17-dione + NADPH + H(+). The catalysed reaction is androsterone + NADP(+) = 5alpha-androstan-3,17-dione + NADPH + H(+). It catalyses the reaction androsterone + NADPH + H(+) = 5alpha-androstane-3alpha,17beta-diol + NADP(+). The enzyme catalyses 5alpha-androstane-3alpha,17beta-diol + NAD(+) = androsterone + NADH + H(+). It carries out the reaction 17beta-estradiol + NADP(+) = estrone + NADPH + H(+). The catalysed reaction is 17beta-estradiol + NAD(+) = estrone + NADH + H(+). It catalyses the reaction testosterone + NADP(+) = androst-4-ene-3,17-dione + NADPH + H(+). The enzyme catalyses 20alpha-hydroxy-5beta-pregnan-3-one + NADP(+) = 5beta-pregnan-3,20-dione + NADPH + H(+). It carries out the reaction 3beta-hydroxy-5beta-pregnane-20-one + NADP(+) = 5beta-pregnan-3,20-dione + NADPH + H(+). The catalysed reaction is 3beta-hydroxy-5beta-pregnane-20-one + NADPH + H(+) = 3beta,20alpha-dihydroxy-5beta-pregnane + NADP(+). It catalyses the reaction (3beta,5alpha,17beta)-3-hydroxyandrostan-17-yl sulfate + NADP(+) = 5alpha-dihydrotestosterone sulfate + NADPH + H(+). Its pathway is steroid metabolism. Its function is as follows. Cytosolic aldo-keto reductase that catalyzes the NADH and NADPH-dependent reduction of ketosteroids to hydroxysteroids. Most probably acts as a reductase in vivo since the oxidase activity measured in vitro is inhibited by physiological concentrations of NADPH. Displays a broad positional specificity acting on positions 3, 17 and 20 of steroids and regulates the metabolism of hormones like estrogens and androgens. May also reduce conjugated steroids such as 5alpha-dihydrotestosterone sulfate. Displays affinity for bile acids. The chain is Aldo-keto reductase family 1 member C1 (AKR1C1) from Pongo abelii (Sumatran orangutan).